Here is a 314-residue protein sequence, read N- to C-terminus: Type II methyltransferase M.HpaI (314 aa).

The protein belongs to the N(4)/N(6)-methyltransferase family.

It carries out the reaction a 2'-deoxyadenosine in DNA + S-adenosyl-L-methionine = an N(6)-methyl-2'-deoxyadenosine in DNA + S-adenosyl-L-homocysteine + H(+). Its function is as follows. A beta subtype methylase that recognizes the double-stranded sequence 5'-GTTAAC-3', methylates A-5 on both strands, and protects the DNA from cleavage by the HpaI endonuclease. The sequence is that of Type II methyltransferase M.HpaI (hpaIM) from Haemophilus parainfluenzae.